The chain runs to 174 residues: Gamma-crystallin C (174 aa).

Beta/gamma crystallin 'Greek key' domains are found at residues 2–40 (GKIT…RVDS) and 41–83 (GCWM…RLIP). S-methylcysteine is present on cysteine 23. The segment at 84 to 87 (HAGS) is connecting peptide. Beta/gamma crystallin 'Greek key' domains lie at 88 to 128 (HRMR…QVLE) and 129 to 171 (GCWV…RRVV).

Belongs to the beta/gamma-crystallin family.

Functionally, crystallins are the dominant structural components of the vertebrate eye lens. This is Gamma-crystallin C (Crygc) from Mus musculus (Mouse).